The sequence spans 252 residues: Imidazole glycerol phosphate synthase subunit HisF (252 aa).

Catalysis depends on residues Asp11 and Asp130.

It belongs to the HisA/HisF family. Heterodimer of HisH and HisF.

Its subcellular location is the cytoplasm. The catalysed reaction is 5-[(5-phospho-1-deoxy-D-ribulos-1-ylimino)methylamino]-1-(5-phospho-beta-D-ribosyl)imidazole-4-carboxamide + L-glutamine = D-erythro-1-(imidazol-4-yl)glycerol 3-phosphate + 5-amino-1-(5-phospho-beta-D-ribosyl)imidazole-4-carboxamide + L-glutamate + H(+). The protein operates within amino-acid biosynthesis; L-histidine biosynthesis; L-histidine from 5-phospho-alpha-D-ribose 1-diphosphate: step 5/9. IGPS catalyzes the conversion of PRFAR and glutamine to IGP, AICAR and glutamate. The HisF subunit catalyzes the cyclization activity that produces IGP and AICAR from PRFAR using the ammonia provided by the HisH subunit. The protein is Imidazole glycerol phosphate synthase subunit HisF of Bacillus pumilus (strain SAFR-032).